The following is a 1227-amino-acid chain: Anion exchange protein 3 (1227 aa).

The segment covering 1–15 has biased composition (pro residues); that stretch reads MANGVIPPPGGPSPL. Disordered regions lie at residues 1–255, 286–312, and 428–497; these read MANG…TDEA, KPSR…KKKK, and NDDK…GDGH. The Cytoplasmic portion of the chain corresponds to 1–707; it reads MANGVIPPPG…DLRDALHSQC (707 aa). The segment covering 58–75 has biased composition (basic and acidic residues); sequence DPEKPSRSYSERDFEFHR. 2 stretches are compositionally biased toward basic residues: residues 76 to 97 and 104 to 113; these read HTSH…KLRR and RHARRKRKKE. Acidic residues predominate over residues 134–152; the sequence is AEEEEEEEEEEEGESEAEP. Phosphoserine is present on residues Ser-167, Ser-170, Ser-175, and Ser-198. Low complexity predominate over residues 194–215; that stretch reads PSDQSPQRSGSSPSPRARASRI. Arg-294 bears the Omega-N-methylarginine mark. Over residues 435–448 the composition is skewed to low complexity; that stretch reads FFPRNPSSSSVNSV. Residues 480–497 are compositionally biased toward basic and acidic residues; sequence HDPDAKEKPLHMPGGDGH. 4 helical membrane-spanning segments follow: residues 708–730, 736–773, 793–815, and 825–846; these read VAAV…GLLG, LMGV…LLVF, VWVG…SFLV, and IFAF…YKVF. The segment at 708-1227 is membrane (anion exchange); sequence VAAVLFIYFA…DEYNELHMPV (520 aa). Asn-868 carries an N-linked (GlcNAc...) asparagine glycan. A helical membrane pass occupies residues 888 to 905; that stretch reads ALLSLILMLGTFLIAFFL. Residues 906–920 lie on the Cytoplasmic side of the membrane; it reads RKFRNSRFLGGKARR. A run of 5 helical transmembrane segments spans residues 921–941, 975–997, 1023–1044, 1078–1123, and 1150–1186; these read VIGD…DYSI, PFPP…LIFM, LLLI…LTAA, VTGV…IQLS, and MHLF…TVPL. Residue Cys-1160 is the site of S-palmitoyl cysteine attachment.

Belongs to the anion exchanger (TC 2.A.31) family. As to expression, expressed in the brain and heart.

The protein localises to the cell membrane. It catalyses the reaction hydrogencarbonate(in) + chloride(out) = hydrogencarbonate(out) + chloride(in). Its function is as follows. Sodium-independent anion exchanger which mediates the electroneutral exchange of chloride for bicarbonate ions across the cell membrane. May be involved in the regulation of intracellular pH, and the modulation of cardiac action potential. The chain is Anion exchange protein 3 (Slc4a3) from Rattus norvegicus (Rat).